Consider the following 469-residue polypeptide: Citrate synthase, mitochondrial (469 aa).

Residues 1–30 (MSFLTVSRLAPKLLNSKNATYFLVAARNAS) constitute a mitochondrion transit peptide. Catalysis depends on residues His-304 and His-350. Position 359 (Arg-359) interacts with oxaloacetate. The active site involves Asp-405. Residues Arg-431 and Arg-451 each coordinate oxaloacetate.

It belongs to the citrate synthase family. As to quaternary structure, homodimer.

It localises to the mitochondrion matrix. The catalysed reaction is oxaloacetate + acetyl-CoA + H2O = citrate + CoA + H(+). The protein operates within carbohydrate metabolism; tricarboxylic acid cycle; isocitrate from oxaloacetate: step 1/2. Functionally, key enzyme of the Krebs tricarboxylic acid cycle which catalyzes the synthesis of citrate from acetyl coenzyme A and oxaloacetate. This Xiphias gladius (Swordfish) protein is Citrate synthase, mitochondrial (cs).